Reading from the N-terminus, the 366-residue chain is 3-dehydroquinate synthase (366 aa).

Residues 75-80 (DGEQYK), 109-113 (GVIGD), 133-134 (TT), Lys146, Lys155, and 173-176 (CLST) each bind NAD(+). Zn(2+)-binding residues include Glu188, His251, and His268.

The protein belongs to the sugar phosphate cyclases superfamily. Dehydroquinate synthase family. Requires Co(2+) as cofactor. The cofactor is Zn(2+). NAD(+) serves as cofactor.

It localises to the cytoplasm. It carries out the reaction 7-phospho-2-dehydro-3-deoxy-D-arabino-heptonate = 3-dehydroquinate + phosphate. The protein operates within metabolic intermediate biosynthesis; chorismate biosynthesis; chorismate from D-erythrose 4-phosphate and phosphoenolpyruvate: step 2/7. Its function is as follows. Catalyzes the conversion of 3-deoxy-D-arabino-heptulosonate 7-phosphate (DAHP) to dehydroquinate (DHQ). The protein is 3-dehydroquinate synthase of Vibrio campbellii (strain ATCC BAA-1116).